A 124-amino-acid chain; its full sequence is Small ribosomal subunit protein uS12c (124 aa).

It belongs to the universal ribosomal protein uS12 family. As to quaternary structure, part of the 30S ribosomal subunit.

The protein resides in the plastid. Its subcellular location is the chloroplast. With S4 and S5 plays an important role in translational accuracy. Located at the interface of the 30S and 50S subunits. This chain is Small ribosomal subunit protein uS12c (rps12), found in Cyanidium caldarium (Red alga).